The sequence spans 410 residues: Argininosuccinate synthase (410 aa).

ATP is bound by residues 10–18 (AYSGGLDTS) and Ala37. Residues Tyr90 and Ser95 each contribute to the L-citrulline site. Gly120 contacts ATP. Positions 122, 126, and 127 each coordinate L-aspartate. An L-citrulline-binding site is contributed by Asn126. Arg130, Ser182, Ser191, Glu267, and Tyr279 together coordinate L-citrulline.

This sequence belongs to the argininosuccinate synthase family. Type 1 subfamily. Homotetramer.

Its subcellular location is the cytoplasm. The catalysed reaction is L-citrulline + L-aspartate + ATP = 2-(N(omega)-L-arginino)succinate + AMP + diphosphate + H(+). Its pathway is amino-acid biosynthesis; L-arginine biosynthesis; L-arginine from L-ornithine and carbamoyl phosphate: step 2/3. The chain is Argininosuccinate synthase from Polynucleobacter asymbioticus (strain DSM 18221 / CIP 109841 / QLW-P1DMWA-1) (Polynucleobacter necessarius subsp. asymbioticus).